The chain runs to 434 residues: Nucleobase transporter PlUacP (434 aa).

12 consecutive transmembrane segments (helical) span residues 9–29, 39–59, 63–83, 93–113, 118–138, 159–179, 181–201, 218–238, 306–326, 327–347, 365–385, and 394–414; these read LGFQ…LIVG, LAYL…LQVW, FFGI…GPMI, AIYG…GFFG, FFPP…LIPV, ALSF…TGFI, AISI…MGKV, FYFG…LVAI, VVIT…IAAL, TLLI…GMVV, LLII…PNLF, and ILTS…NFLF.

This sequence belongs to the nucleobase:cation symporter-2 (NCS2) (TC 2.A.40) family.

It is found in the cell membrane. Its activity is regulated as follows. Inhibited by the proton gradient disruptor carbonyl cyanide m-chlorophenylhydrazone (CCCP), but not by the sodium gradient disruptor ouabain. Hypoxanthine, xanthine, cytosine and uric acid act as competitive inhibitors. Uptake of the purines adenine and guanine, and the pyrimidine uracil. Transport is probably proton-dependent. The sequence is that of Nucleobase transporter PlUacP from Paenibacillus larvae subsp. larvae (strain NRRL B-3650 / LMG 16245).